Here is a 155-residue protein sequence, read N- to C-terminus: FUN14 domain-containing protein 1 (155 aa).

Residues M1–K47 lie on the Cytoplasmic side of the membrane. Phosphoserine is present on residues S13 and S17. Y18 carries the post-translational modification Phosphotyrosine; by SRC. A YXXL motif is present at residues Y18–L21. The helical transmembrane segment at Y48–F68 threads the bilayer. The Mitochondrial intermembrane segment spans residues Q69–L74. Residues A75–V95 form a helical membrane-spanning segment. Residues Q96 to D133 lie on the Cytoplasmic side of the membrane. A Glycyl lysine isopeptide (Lys-Gly) (interchain with G-Cter in ubiquitin) cross-link involves residue K119. Residues F134–A154 form a helical membrane-spanning segment. S155 is a topological domain (mitochondrial intermembrane).

It belongs to the FUN14 family. As to quaternary structure, interacts (via YXXL motif) with MAP1 LC3 family proteins MAP1LC3A, MAP1LC3B and GABARAP. Interacts with DNM1L/DPR1. Interacts with GPX4. In terms of processing, phosphorylation at Ser-13 by CK2 and at Tyr-18 by SRC inhibits activation of mitophagy. Following hypoxia, dephosphorylated at Tyr-18, leading to interaction with MAP1 LC3 family proteins and triggering mitophagy. Dephosphorylation is mediated by PGAM5. Phosphorylated by ULK1 at Ser-17 which enhances FUNDC1 binding to LC3. Ubiquitinated on Lys-119. Deubiquitinated by USP19; leading to hypoxia-induced DRP1 oligomerization and GTPase activity.

The protein localises to the mitochondrion outer membrane. Functionally, integral mitochondrial outer-membrane protein that mediates the formation of mitochondria-associated endoplasmic reticulum membranes (MAMs). In turn, mediates angiogenesis and neoangiogenesis through interference with intracellular Ca(2+) communication and regulation of the vascular endothelial growth factor receptor KDR/VEGFR2 expression at both mRNA and protein levels. Also acts as an activator of hypoxia-induced mitophagy, an important mechanism for mitochondrial quality and homeostasis, by interacting with and recruiting LC3 protein family to mitochondria. Mechanistically, recruits DRP1 at ER-mitochondria contact sites leading to DRP1 oligomerization and GTPase activity to facilitate mitochondrial fission during hypoxia. Additionally, plays a role in hepatic ferroptosis by interacting directly with glutathione peroxidase/GPX4 to facilitate its recruitment into mitochondria through TOM/TIM complex where it is degraded by mitophagy. In Mus musculus (Mouse), this protein is FUN14 domain-containing protein 1 (Fundc1).